We begin with the raw amino-acid sequence, 661 residues long: Zeaxanthin epoxidase, chloroplastic (661 aa).

The N-terminal 59 residues, M1–Q59, are a transit peptide targeting the chloroplast. FAD is bound by residues R81 to E109 and I359 to D372. The 55-residue stretch at H555–G609 folds into the FHA domain.

FAD serves as cofactor. In terms of tissue distribution, expressed in flower buds, lips and leaves. Detected in roots.

It localises to the plastid. Its subcellular location is the chloroplast. It catalyses the reaction all-trans-zeaxanthin + 4 reduced [2Fe-2S]-[ferredoxin] + 2 O2 + 4 H(+) = all-trans-violaxanthin + 4 oxidized [2Fe-2S]-[ferredoxin] + 2 H2O. The protein operates within plant hormone biosynthesis; abscisate biosynthesis. Its function is as follows. Zeaxanthin epoxidase that plays an important role in the xanthophyll cycle and abscisic acid (ABA) biosynthesis. Converts zeaxanthin into antheraxanthin and subsequently violaxanthin. This Oncidium hybrid cultivar (Orchid) protein is Zeaxanthin epoxidase, chloroplastic (ZEP).